Consider the following 172-residue polypeptide: Large ribosomal subunit protein uL10 (172 aa).

Belongs to the universal ribosomal protein uL10 family. Part of the ribosomal stalk of the 50S ribosomal subunit. The N-terminus interacts with L11 and the large rRNA to form the base of the stalk. The C-terminus forms an elongated spine to which L12 dimers bind in a sequential fashion forming a multimeric L10(L12)X complex.

Forms part of the ribosomal stalk, playing a central role in the interaction of the ribosome with GTP-bound translation factors. This is Large ribosomal subunit protein uL10 from Parvibaculum lavamentivorans (strain DS-1 / DSM 13023 / NCIMB 13966).